A 255-amino-acid chain; its full sequence is Imidazole glycerol phosphate synthase subunit HisF (255 aa).

Catalysis depends on residues Asp-11 and Asp-130.

The protein belongs to the HisA/HisF family. Heterodimer of HisH and HisF.

The protein resides in the cytoplasm. It catalyses the reaction 5-[(5-phospho-1-deoxy-D-ribulos-1-ylimino)methylamino]-1-(5-phospho-beta-D-ribosyl)imidazole-4-carboxamide + L-glutamine = D-erythro-1-(imidazol-4-yl)glycerol 3-phosphate + 5-amino-1-(5-phospho-beta-D-ribosyl)imidazole-4-carboxamide + L-glutamate + H(+). It functions in the pathway amino-acid biosynthesis; L-histidine biosynthesis; L-histidine from 5-phospho-alpha-D-ribose 1-diphosphate: step 5/9. In terms of biological role, IGPS catalyzes the conversion of PRFAR and glutamine to IGP, AICAR and glutamate. The HisF subunit catalyzes the cyclization activity that produces IGP and AICAR from PRFAR using the ammonia provided by the HisH subunit. This Synechococcus sp. (strain ATCC 27144 / PCC 6301 / SAUG 1402/1) (Anacystis nidulans) protein is Imidazole glycerol phosphate synthase subunit HisF.